Here is an 88-residue protein sequence, read N- to C-terminus: Small ribosomal subunit protein bS16c (88 aa).

It belongs to the bacterial ribosomal protein bS16 family.

The protein resides in the plastid. It localises to the chloroplast. The sequence is that of Small ribosomal subunit protein bS16c from Atropa belladonna (Belladonna).